The primary structure comprises 435 residues: Transforming growth factor beta-2 proprotein (435 aa).

The first 20 residues, 1 to 20, serve as a signal peptide directing secretion; the sequence is MHYCVLSAFLLLHLVTVALS. Residues asparagine 72, asparagine 140, and asparagine 241 are each glycosylated (N-linked (GlcNAc...) asparagine). Disulfide bonds link cysteine 309/cysteine 318, cysteine 317/cysteine 380, cysteine 346/cysteine 411, and cysteine 350/cysteine 413.

It belongs to the TGF-beta family. In terms of assembly, interacts with the serine proteases, HTRA1 and HTRA3. Interacts with ASPN. Interacts with MFAP5. Interacts with Transforming growth factor beta-2 (TGF-beta-2) chain; interaction is non-covalent and maintains (TGF-beta-2) in a latent state. Interacts with LRRC32/GARP; leading to regulate activation of TGF-beta-2. Interacts with NREP; the interaction results in a decrease in TGFB2 autoinduction. As to quaternary structure, transforming growth factor beta-2: Homodimer; disulfide-linked. Transforming growth factor beta-2: Interacts with TGF-beta receptors (TGFBR1 and TGFBR2), leading to signal transduction. Post-translationally, the precursor proprotein is cleaved in the Golgi apparatus to form Transforming growth factor beta-2 (TGF-beta-2) and Latency-associated peptide (LAP) chains, which remain non-covalently linked, rendering TGF-beta-2 inactive.

Its subcellular location is the secreted. The protein resides in the extracellular space. The protein localises to the extracellular matrix. In terms of biological role, precursor of the Latency-associated peptide (LAP) and Transforming growth factor beta-2 (TGF-beta-2) chains, which constitute the regulatory and active subunit of TGF-beta-2, respectively. Required to maintain the Transforming growth factor beta-2 (TGF-beta-2) chain in a latent state during storage in extracellular matrix. Associates non-covalently with TGF-beta-2 and regulates its activation via interaction with 'milieu molecules', such as LTBP1 and LRRC32/GARP, that control activation of TGF-beta-2. Its function is as follows. Multifunctional protein that regulates various processes such as angiogenesis and heart development. Activation into mature form follows different steps: following cleavage of the proprotein in the Golgi apparatus, Latency-associated peptide (LAP) and Transforming growth factor beta-2 (TGF-beta-2) chains remain non-covalently linked rendering TGF-beta-2 inactive during storage in extracellular matrix. At the same time, LAP chain interacts with 'milieu molecules', such as LTBP1 and LRRC32/GARP, that control activation of TGF-beta-2 and maintain it in a latent state during storage in extracellular milieus. Once activated following release of LAP, TGF-beta-2 acts by binding to TGF-beta receptors (TGFBR1 and TGFBR2), which transduce signal. The chain is Transforming growth factor beta-2 proprotein (TGFB2) from Sus scrofa (Pig).